The sequence spans 272 residues: MISIDSTAMKTNSFDLANLSQDDTALEIRNLDLRYGDKQALFNVSMKIPKKQVTAFIGPSGCGKSTLLRCINRMNDLVDNCHIDGEILLHGQNIYDKRIDVAALRRNVGMVFQRPNPFPKSIYENVVYGLRLQGINNRRELDEAAERSLRGAAIWDEVKDRLHDNAFGLSGGQQQRLVIARAIAIEPEVLLLDEPTSALDPISTLTIEELITELKTKYTVVIVTHNMQQAARVSDQTAFMYMGELVEYADTNTIFTTPKKRKTEDYITGRYG.

The region spanning 26 to 267 is the ABC transporter domain; that stretch reads LEIRNLDLRY…PKKRKTEDYI (242 aa). 58-65 is a binding site for ATP; it reads GPSGCGKS.

It belongs to the ABC transporter superfamily. Phosphate importer (TC 3.A.1.7) family. As to quaternary structure, the complex is composed of two ATP-binding proteins (PstB), two transmembrane proteins (PstC and PstA) and a solute-binding protein (PstS).

The protein localises to the cell inner membrane. It carries out the reaction phosphate(out) + ATP + H2O = ADP + 2 phosphate(in) + H(+). In terms of biological role, part of the ABC transporter complex PstSACB involved in phosphate import. Responsible for energy coupling to the transport system. In Shewanella oneidensis (strain ATCC 700550 / JCM 31522 / CIP 106686 / LMG 19005 / NCIMB 14063 / MR-1), this protein is Phosphate import ATP-binding protein PstB 1.